Reading from the N-terminus, the 354-residue chain is DNA replication and repair protein RecF (354 aa).

ATP is bound at residue 30–37 (GDNGSGKT).

It belongs to the RecF family.

Its subcellular location is the cytoplasm. The RecF protein is involved in DNA metabolism; it is required for DNA replication and normal SOS inducibility. RecF binds preferentially to single-stranded, linear DNA. It also seems to bind ATP. This Idiomarina loihiensis (strain ATCC BAA-735 / DSM 15497 / L2-TR) protein is DNA replication and repair protein RecF.